Reading from the N-terminus, the 1026-residue chain is Multidrug resistance protein MdtC (1026 aa).

11 helical membrane-spanning segments follow: residues 15-35 (ILIA…LPVA), 333-353 (EVEE…FLFL), 360-380 (LIPA…MYLC), 387-407 (LSLM…IVVL), 431-451 (VGFT…PLLL), 463-483 (FAVT…TLTP), 528-548 (LVGV…IAIP), 853-873 (LILI…LYES), 897-917 (LFNA…IGIV), 953-973 (PIMM…LSGG), and 984-1004 (ITIV…TPVV).

Belongs to the resistance-nodulation-cell division (RND) (TC 2.A.6) family. MdtC subfamily. Part of a tripartite efflux system composed of MdtA, MdtB and MdtC. MdtC forms a heteromultimer with MdtB.

Its subcellular location is the cell inner membrane. This chain is Multidrug resistance protein MdtC, found in Salmonella paratyphi A (strain ATCC 9150 / SARB42).